Here is a 211-residue protein sequence, read N- to C-terminus: Ribosomal RNA small subunit methyltransferase G (211 aa).

Residues Gly-79, Leu-84, 130-131 (VE), and Arg-145 each bind S-adenosyl-L-methionine.

This sequence belongs to the methyltransferase superfamily. RNA methyltransferase RsmG family.

Its subcellular location is the cytoplasm. The catalysed reaction is guanosine(527) in 16S rRNA + S-adenosyl-L-methionine = N(7)-methylguanosine(527) in 16S rRNA + S-adenosyl-L-homocysteine. Its function is as follows. Specifically methylates the N7 position of guanine in position 527 of 16S rRNA. The polypeptide is Ribosomal RNA small subunit methyltransferase G (Alteromonas mediterranea (strain DSM 17117 / CIP 110805 / LMG 28347 / Deep ecotype)).